An 88-amino-acid polypeptide reads, in one-letter code: Alpha-latrotoxin associated low molecular weight protein (88 aa).

Positions 1 to 18 are cleaved as a signal peptide; the sequence is MSKLFFVAFLCLIISVFA.

The protein belongs to the arthropod CHH/MIH/GIH/VIH hormone family. As to expression, expressed by the venom gland.

It is found in the secreted. May increase the toxicity of alpha-latrotoxin and/or other venom components. Is non-toxic to mice and to the cockroach Periplaneta americana. This Latrodectus hesperus (Western black widow spider) protein is Alpha-latrotoxin associated low molecular weight protein.